A 475-amino-acid polypeptide reads, in one-letter code: Ataxin-10 (475 aa).

Arginine 10 bears the Omega-N-methylarginine mark. Serine 12 is modified (phosphoserine; by AURKB). At serine 77 the chain carries Phosphoserine; by PLK1. Phosphothreonine; by PLK1 is present on threonine 82. A Phosphoserine modification is found at serine 430.

Belongs to the ataxin-10 family. Homooligomer. Interacts with GNB2. Interacts with IQCB1. Interacts with OGT. Polyubiquitinated. Post-translationally, phosphorylation at Ser-12 by AURKB promotes the association of ATXN10 with PLK1. Phosphorylation at Ser-77 and Thr-82 by PLK1 may play a role in the regulation of cytokinesis and may stimulate the proteasome-mediated degradation of ATXN10. Expressed in the central nervous system.

The protein resides in the cytoplasm. It is found in the perinuclear region. It localises to the midbody. The protein localises to the cytoskeleton. Its subcellular location is the cilium basal body. The protein resides in the microtubule organizing center. It is found in the centrosome. It localises to the centriole. In terms of biological role, may play a role in the regulation of cytokinesis. May play a role in signaling by stimulating protein glycosylation. Induces neuritogenesis by activating the Ras-MAP kinase pathway and is necessary for the survival of cerebellar neurons. Does not appear to play a major role in ciliogenesis. The protein is Ataxin-10 (ATXN10) of Homo sapiens (Human).